The chain runs to 218 residues: Protease PrsW (218 aa).

The helical transmembrane segment at 1-23 threads the bilayer; that stretch reads MFAIISAGIAPGIALLSYFYLKD. Topologically, residues 24–30 are cytoplasmic; it reads QYDNEPV. The chain crosses the membrane as a helical span at residues 31–53; the sequence is HMVLRSFFLGVVLVFPIMFIQYV. Residues 54 to 98 are Extracellular-facing; that stretch reads LEKENVGGGSFFVSFLSSGFLEESLKWFILMISVYPHAHFDEHYD. Residues 99–121 traverse the membrane as a helical segment; sequence GIVYGASVSLGFATLENILYLIG. Residues 122 to 129 are Cytoplasmic-facing; it reads HGVEHAFV. A helical membrane pass occupies residues 130 to 151; the sequence is RALLPVSCHALIGVIMGFYLGK. The Extracellular segment spans residues 152–180; that stretch reads ARFSADKARVKWLTLSLVVPSLLHGSYDF. A helical membrane pass occupies residues 181–203; the sequence is ILTALSNWIYYMLPFMVFLWWFG. At 204-218 the chain is on the cytoplasmic side; it reads LRKAKKARSVNMMQV.

Belongs to the protease PrsW family.

The protein resides in the cell membrane. Involved in the degradation of anti-sigma-W factor RsiW. Responsible for Site-1 cleavage of the RsiW anti-sigma factor. This results, after two other proteolytic steps catalyzed by the RasP and ClpXP proteases, in the release of SigW and the transcription activation of the genes under the control of the sigma-W factor. Seems to be responsible for sensing antimicrobial peptides that damage the cell membrane and other agents that cause cell envelope stress. Therefore it is a protease governing regulated intramembrane proteolysis and resistance to antimicrobial peptides in B.subtilis. This chain is Protease PrsW, found in Bacillus subtilis (strain 168).